The following is a 269-amino-acid chain: Tryptophan synthase alpha chain (269 aa).

Active-site proton acceptor residues include Glu-50 and Asp-61.

It belongs to the TrpA family. As to quaternary structure, tetramer of two alpha and two beta chains.

It catalyses the reaction (1S,2R)-1-C-(indol-3-yl)glycerol 3-phosphate + L-serine = D-glyceraldehyde 3-phosphate + L-tryptophan + H2O. The protein operates within amino-acid biosynthesis; L-tryptophan biosynthesis; L-tryptophan from chorismate: step 5/5. The alpha subunit is responsible for the aldol cleavage of indoleglycerol phosphate to indole and glyceraldehyde 3-phosphate. The polypeptide is Tryptophan synthase alpha chain (Francisella tularensis subsp. tularensis (strain WY96-3418)).